Consider the following 297-residue polypeptide: Urease accessory protein UreD (297 aa).

The protein belongs to the UreD family. UreD, UreF and UreG form a complex that acts as a GTP-hydrolysis-dependent molecular chaperone, activating the urease apoprotein by helping to assemble the nickel containing metallocenter of UreC. The UreE protein probably delivers the nickel.

It localises to the cytoplasm. In terms of biological role, required for maturation of urease via the functional incorporation of the urease nickel metallocenter. The chain is Urease accessory protein UreD from Prochlorococcus marinus subsp. pastoris (strain CCMP1986 / NIES-2087 / MED4).